Consider the following 154-residue polypeptide: MAKEKERIKVVSDNRQARFLYEILETYEAGIELQGTEVKSIRAGKVNLRDGFALLRDGEVWLMNVHISPYDKSSLFFNHDPRRTRRLLMHNWEIRKLIGQVEQKGLTLVPLKMYFKGSWVKVALGLGKGKKLHDKRETLKRRQDDRDMARAMKR.

This sequence belongs to the SmpB family.

It is found in the cytoplasm. Required for rescue of stalled ribosomes mediated by trans-translation. Binds to transfer-messenger RNA (tmRNA), required for stable association of tmRNA with ribosomes. tmRNA and SmpB together mimic tRNA shape, replacing the anticodon stem-loop with SmpB. tmRNA is encoded by the ssrA gene; the 2 termini fold to resemble tRNA(Ala) and it encodes a 'tag peptide', a short internal open reading frame. During trans-translation Ala-aminoacylated tmRNA acts like a tRNA, entering the A-site of stalled ribosomes, displacing the stalled mRNA. The ribosome then switches to translate the ORF on the tmRNA; the nascent peptide is terminated with the 'tag peptide' encoded by the tmRNA and targeted for degradation. The ribosome is freed to recommence translation, which seems to be the essential function of trans-translation. This chain is SsrA-binding protein, found in Synechocystis sp. (strain ATCC 27184 / PCC 6803 / Kazusa).